The primary structure comprises 979 residues: Ankycorbin (979 aa).

At methionine 1 the chain carries N-acetylmethionine. At serine 11 the chain carries Phosphoserine. ANK repeat units lie at residues 18 to 51, 52 to 81, 85 to 114, 118 to 147, 151 to 180, 184 to 213, and 217 to 247; these read KNDDRLLQAVENGDAEKVASLLGKKGASATKHDS, EGKTAFHLAAAKGHVECLKVMVTHGVDVTA, SGHSALHVAAKNGHPECIRKLLQYKSPAEN, SGKTALHYAAAQGCLQAVQLLCEHKSPINL, DGNIPLLVAVQNGHSEACHFLLDHGADVNS, NGRTALMLACETGSSNTVDALIKKGADLSL, and LGHNALHYSKLSENAGIQNLLLSKISQDADL. Residues 247–259 are compositionally biased toward basic and acidic residues; the sequence is LKTPTKPKQHDQV. The segment at 247 to 299 is disordered; the sequence is LKTPTKPKQHDQVSKISSERSGTPKKRKAPPPPISPTQLSDVSSPRSITSTPL. Threonine 249 is modified (phosphothreonine). The short motif at 270-276 is the Nuclear localization signal element; sequence PKKRKAP. 3 positions are modified to phosphoserine: serine 281, serine 286, and serine 293. The segment covering 282-299 has biased composition (polar residues); it reads PTQLSDVSSPRSITSTPL. A phosphothreonine mark is found at threonine 295 and threonine 297. Serine 300, serine 304, serine 318, serine 327, serine 329, serine 340, serine 341, and serine 358 each carry phosphoserine. Positions 349-374 form a coiled coil; that stretch reads LVLLQAKVASLTLHNKELQDKLQAKS. Disordered regions lie at residues 392 to 429 and 446 to 467; these read TQTDLAPSPGKASDIPSSDAKSSPPVEHPAGTSTTDND and LESSEAEKKQLQDELQSQRTDT. Residues 430 to 943 are a coiled coil; it reads VIIRQLQDSL…CKKHHQEVIS (514 aa). Residues 446 to 457 are compositionally biased toward basic and acidic residues; the sequence is LESSEAEKKQLQ. Residues 458 to 467 are compositionally biased toward polar residues; that stretch reads DELQSQRTDT. Residues serine 513, serine 516, serine 667, serine 694, and serine 914 each carry the phosphoserine modification.

In terms of assembly, interacts with PALLD. Associates with actin. However, does not bind F-actin directly. In terms of tissue distribution, highly expressed in testis, where it localizes to seminiferous tubules (at protein level). Expressed in ganglion cell layer and in Muller cell fibers of the retina (at protein level). In small intestine highly expressed at the apical and lateral borders of absorptive epithelia (at protein level). In liver highly expressed along the bile canaliculi (at protein level).

The protein resides in the cytoplasm. Its subcellular location is the cytoskeleton. It is found in the stress fiber. The protein localises to the cell cortex. It localises to the cell junction. The protein resides in the nucleus. Its function is as follows. Plays a role in actin regulation at the ectoplasmic specialization, a type of cell junction specific to testis. Important for establishment of sperm polarity and normal spermatid adhesion. May also promote integrity of Sertoli cell tight junctions at the blood-testis barrier. The polypeptide is Ankycorbin (Rai14) (Mus musculus (Mouse)).